Here is a 184-residue protein sequence, read N- to C-terminus: MAAKTKTLELEDNVFLLLEGNLKRIFATPIGYTTFREFQNVVFNCANGQQEIANFFFEMLINGKLTQELAPQQKQAAHSLIAEFMMPIRVAKDIHERGEFINFITSDMLTQQERCIFLNRLARVDGQEFLLMTDVQNTCHLIRHLLARLLEAQKNPVGEKNLQEIQEEITSLKNHFDELTKALQ.

Belongs to the chlamydial CPn_0803/CT_584/TC_0873 family.

In Chlamydia pneumoniae (Chlamydophila pneumoniae), this protein is Protein CPn_0803/CP_1068/CPj0803/CpB0832.